The sequence spans 122 residues: Ribosome-binding factor A (122 aa).

The protein belongs to the RbfA family. Monomer. Binds 30S ribosomal subunits, but not 50S ribosomal subunits or 70S ribosomes.

The protein localises to the cytoplasm. In terms of biological role, one of several proteins that assist in the late maturation steps of the functional core of the 30S ribosomal subunit. Associates with free 30S ribosomal subunits (but not with 30S subunits that are part of 70S ribosomes or polysomes). Required for efficient processing of 16S rRNA. May interact with the 5'-terminal helix region of 16S rRNA. The chain is Ribosome-binding factor A from Polaromonas sp. (strain JS666 / ATCC BAA-500).